The following is a 1082-amino-acid chain: CRISPR-associated endonuclease Cas9 (1082 aa).

Asp16 acts as the For RuvC-like nuclease domain in catalysis. 3 residues coordinate Mg(2+): Asp16, Glu504, and Glu508. Positions 512 to 667 (SFKDRKEIEK…DEDGFKERNL (156 aa)) constitute an HNH Cas9-type domain. The active-site Proton acceptor for HNH nuclease domain is His588. Mg(2+) is bound at residue His723.

It belongs to the CRISPR-associated protein Cas9 family. Subtype II-C subfamily. As to quaternary structure, monomer. Binds crRNA and tracrRNA. The cofactor is Mg(2+).

In terms of biological role, CRISPR (clustered regularly interspaced short palindromic repeat) is an adaptive immune system that provides protection against mobile genetic elements (viruses, transposable elements and conjugative plasmids). CRISPR clusters contain spacers, sequences complementary to antecedent mobile elements, and target invading nucleic acids. CRISPR clusters are transcribed and processed into CRISPR RNA (crRNA). In type II CRISPR systems correct processing of pre-crRNA requires a trans-encoded small RNA (tracrRNA), endogenous ribonuclease 3 (rnc) and this protein. The tracrRNA serves as a guide for ribonuclease 3-aided processing of pre-crRNA. Subsequently Cas9/crRNA/tracrRNA endonucleolytically cleaves linear or circular dsDNA target complementary to the spacer; Cas9 is inactive in the absence of the 2 guide RNAs (gRNA). Cas9 recognizes the protospacer adjacent motif (PAM) in the CRISPR repeat sequences to help distinguish self versus nonself, as targets within the bacterial CRISPR locus do not have PAMs. PAM recognition is also required for catalytic activity. Cuts target DNA in Cas9:gRNAs mixing experiments with C.jejuni strain NCTC 11168 and P.multocoda strain Pm70. The protein is CRISPR-associated endonuclease Cas9 of Neisseria meningitidis serogroup A / serotype 4A (strain DSM 15465 / Z2491).